A 409-amino-acid polypeptide reads, in one-letter code: 2,3-bisphosphoglycerate-independent phosphoglycerate mutase 1 (409 aa).

Basic and acidic residues predominate over residues 163–173; it reads SDADPKVEGKP. The interval 163 to 184 is disordered; that stretch reads SDADPKVEGKPPKKIKALDGSP.

Belongs to the BPG-independent phosphoglycerate mutase family. A-PGAM subfamily.

The enzyme catalyses (2R)-2-phosphoglycerate = (2R)-3-phosphoglycerate. It functions in the pathway carbohydrate degradation; glycolysis; pyruvate from D-glyceraldehyde 3-phosphate: step 3/5. Catalyzes the interconversion of 2-phosphoglycerate and 3-phosphoglycerate. The protein is 2,3-bisphosphoglycerate-independent phosphoglycerate mutase 1 (apgM1) of Methanothermobacter thermautotrophicus (strain ATCC 29096 / DSM 1053 / JCM 10044 / NBRC 100330 / Delta H) (Methanobacterium thermoautotrophicum).